The following is a 355-amino-acid chain: MKIDILSLFPEYFDSPLRSSILGRAIKRGLLDIQSRDIREFGLGKWKQVDDAPFNHDGMLLMAEPVVKAIRHVKRSDSKVVYLSPQGQLLTAKKSRELAQCSHLIFLCGHYEGIDERALESEVDEEISIGDYVLTNGGIAALVVIDALSRFIPGVLGNQESADKDSMENGLLEGPQYTRPRVFEGREVPEVLLHGDHQAIAKWRKQISLDRTRERRPDLYIRYLYDRENEEVTQQETDLKQSMLEGESAVILEVEDLHRSRKFYSKMFRLNQPVNNRLHIPGKTQMTIHLQEVGLKSKNIVLLSLRLGCKDDFFSFLGRWKMLGGTLEQADDRGEVRLVRDFDGHVWAISCKQAE.

S-adenosyl-L-methionine-binding positions include glycine 109 and 129-134 (IGDYVL).

This sequence belongs to the RNA methyltransferase TrmD family. As to quaternary structure, homodimer.

The protein resides in the cytoplasm. The enzyme catalyses guanosine(37) in tRNA + S-adenosyl-L-methionine = N(1)-methylguanosine(37) in tRNA + S-adenosyl-L-homocysteine + H(+). Functionally, specifically methylates guanosine-37 in various tRNAs. In Chlamydia abortus (strain DSM 27085 / S26/3) (Chlamydophila abortus), this protein is tRNA (guanine-N(1)-)-methyltransferase.